A 592-amino-acid chain; its full sequence is MKTGTIVKVSGPLVVAEGMRDANMFDVVRVSDKHLIGEIIEMHGDKASIQVYEETSGLGPGEEVVSLGMPMSVELGPGLISTIYDGIQRPLEKMYDISGTNITKGVEVSSLDRTTKWEFKPKKSVGDKVVAGDIIGGVQETAVVECKIMVPYGVKGTIKEIYSGEFTVEDTVCVITDEKGNDIPVTMMQKWPVRKERPYREKKTPDSLLVTGQRVIDTFFPITKGGVAAIPGPFGSGKTVTQHQLAKWADADIVVYIGCGERGNEMTDVLLEFPELKDPRTGESLMQRTVLIANTSDMPVAAREASIYTGITIAEYFRDMGYSVALMADSTSRWAEALREMSGRLEEMPGEEGYPAYLGSRLAQFYERAGKVNCLGMDEREGTLTAIGAVSPPGGDTSEPVSQATLRIVKVFWGLDASLAYKRHFPAINWLTSYSLYQEKVDVWADKNVNDNFSAQRAQAMKLLQVESELQEIVQLVGVDSLSDGDRLILEVTRSIREDFLHQNSFHEVDTYTSLHKQYRMMGLILKFYKSAQDAIKQNVTINDIIKLSVLEKIGRAKYVEEGDIDAAYDSIEDEIDNELADLIKKRGAEEL.

232–239 (GPFGSGKT) contributes to the ATP binding site.

It belongs to the ATPase alpha/beta chains family.

The catalysed reaction is ATP + H2O + 4 H(+)(in) = ADP + phosphate + 5 H(+)(out). Produces ATP from ADP in the presence of a proton gradient across the membrane. The V-type alpha chain is a catalytic subunit. The polypeptide is V-type ATP synthase alpha chain (Clostridioides difficile (strain 630) (Peptoclostridium difficile)).